The primary structure comprises 166 residues: Ribosome-binding factor A (166 aa).

A disordered region spans residues 119-166; the sequence is VQAQAKSGVYAGDEDPYVKPRVIGEDEDEDDEDGDDIDRSAPGYEPAH. A compositionally biased stretch (acidic residues) spans 143-154; it reads EDEDEDDEDGDD.

Belongs to the RbfA family. Monomer. Binds 30S ribosomal subunits, but not 50S ribosomal subunits or 70S ribosomes.

It localises to the cytoplasm. One of several proteins that assist in the late maturation steps of the functional core of the 30S ribosomal subunit. Associates with free 30S ribosomal subunits (but not with 30S subunits that are part of 70S ribosomes or polysomes). Required for efficient processing of 16S rRNA. May interact with the 5'-terminal helix region of 16S rRNA. The chain is Ribosome-binding factor A from Clavibacter michiganensis subsp. michiganensis (strain NCPPB 382).